Consider the following 93-residue polypeptide: Envelope small membrane protein (93 aa).

Residues 1–11 (MMNLLNKSLEE) lie on the Virion surface side of the membrane. The chain crosses the membrane as a helical span at residues 12–32 (NGSVLTAFYIFVAFVALYLLG). The Intravirion segment spans residues 33 to 93 (RALQAFVQAA…NEFPKNGWKQ (61 aa)).

This sequence belongs to the gammacoronaviruses E protein family. In terms of assembly, homooligomer. Interacts with the M membrane protein in the budding compartment of the host cell, which is located between endoplasmic reticulum and the Golgi complex. The cytoplasmic tails of both proteins are important for this function. Interacts with Nucleoprotein.

The protein resides in the host Golgi apparatus membrane. Functionally, plays a central role in virus morphogenesis and assembly. Acts as a viroporin and self-assembles in host membranes forming pentameric protein-lipid pores that allow ion transport. Also plays a role in the induction of apoptosis. In Avian infectious bronchitis virus (strain Portugal/322/82) (IBV), this protein is Envelope small membrane protein.